The chain runs to 348 residues: Rhodopsin (348 aa).

At Met1 the chain carries N-acetylmethionine. Residues 1–36 (MNGTEGPNFYVPFSNKTGVVRSPFEYPQYYLAEPWQ) lie on the Extracellular side of the membrane. N-linked (GlcNAc...) asparagine glycosylation is found at Asn2 and Asn15. The helical transmembrane segment at 37–61 (FSMLAAYMFLLIVLGFPINFLTLYV) threads the bilayer. Topologically, residues 62–73 (TVQHKKLRTPLN) are cytoplasmic. The helical transmembrane segment at 74–96 (YILLNLAVADLFMVFGGFTTTLY) threads the bilayer. The Extracellular portion of the chain corresponds to 97–110 (TSLHGYFVFGPTGC). The cysteines at positions 110 and 187 are disulfide-linked. The helical transmembrane segment at 111 to 133 (NLEGFFATLGGEIALWSLVVLAI) threads the bilayer. The 'Ionic lock' involved in activated form stabilization motif lies at 134 to 136 (ERY). The Cytoplasmic segment spans residues 134 to 152 (ERYVVVCKPMSNFRFGENH). Residues 153–173 (AIMGVAFTWVMALACAAPPLV) form a helical membrane-spanning segment. Over 174–202 (GWSRYIPEGMQCSCGIDYYTLKPEVNNES) the chain is Extracellular. Glu201 is a binding site for Zn(2+). The helical transmembrane segment at 203 to 224 (FVIYMFVVHFTIPMIVIFFCYG) threads the bilayer. At 225 to 252 (QLVFTVKEAAAQQQESATTQKAEKEVTR) the chain is on the cytoplasmic side. Residues 253–274 (MVIIMVIAFLICWVPYASVAFY) form a helical membrane-spanning segment. Residues 275-286 (IFTHQGSNFGPI) lie on the Extracellular side of the membrane. A Zn(2+)-binding site is contributed by Gln279. Residues 287-308 (FMTLPAFFAKSSSIYNPVIYIM) form a helical membrane-spanning segment. Lys296 carries the post-translational modification N6-(retinylidene)lysine. Topologically, residues 309–348 (MNKQFRNCMLTTLCCGKNPLGDDEASTTGSKTETSQVAPA) are cytoplasmic. 2 S-palmitoyl cysteine lipidation sites follow: Cys322 and Cys323. The interaction with SAG stretch occupies residues 330–348 (DDEASTTGSKTETSQVAPA). A Phosphoserine modification is found at Ser334. Residues Thr335 and Thr336 each carry the phosphothreonine modification. Ser338 carries the phosphoserine modification. Phosphothreonine is present on residues Thr340 and Thr342. Ser343 bears the Phosphoserine mark.

This sequence belongs to the G-protein coupled receptor 1 family. Opsin subfamily. Homodimer. May form a complex composed of RHO, GRK1 and RCVRN in a Ca(2+)-dependent manner; RCVRN prevents the interaction between GRK1 and RHO. Interacts with GRK1. Interacts (phosphorylated form) with SAG. Interacts with GNAT1. Interacts with GNAT3. SAG and G-proteins compete for a common binding site. Interacts with PRCD; the interaction promotes PRCD stability. Forms a complex with ASAP1 and ARF4. Forms a complex with ASAP1, RAB11A, Rabin8/RAB3IP, ARF4 and RAB11FIP3; the complex regulates Golgi-to-cilia rhodopsin/RHO transport in photoreceptors. In terms of processing, phosphorylated on some or all of the serine and threonine residues present in the C-terminal region. Contains one covalently linked retinal chromophore. Upon light absorption, the covalently bound 11-cis-retinal is converted to all-trans-retinal. After hydrolysis of the Schiff base and release of the covalently bound all-trans-retinal, active rhodopsin is regenerated by binding of a fresh molecule of 11-cis-retinal.

The protein localises to the membrane. It localises to the cell projection. The protein resides in the cilium. It is found in the photoreceptor outer segment. Photoreceptor required for image-forming vision at low light intensity. Required for photoreceptor cell viability after birth. Light-induced isomerization of 11-cis to all-trans retinal triggers a conformational change that activates signaling via G-proteins. Subsequent receptor phosphorylation mediates displacement of the bound G-protein alpha subunit by the arrestin SAG and terminates signaling. In Felis catus (Cat), this protein is Rhodopsin (RHO).